The chain runs to 294 residues: Nucleotide-binding protein CLJ_B3680 (294 aa).

8–15 (GLSGAGKT) serves as a coordination point for ATP. 59 to 62 (DIRG) lines the GTP pocket.

It belongs to the RapZ-like family.

Displays ATPase and GTPase activities. This is Nucleotide-binding protein CLJ_B3680 from Clostridium botulinum (strain 657 / Type Ba4).